A 286-amino-acid polypeptide reads, in one-letter code: Phycobilisome 32.1 kDa linker polypeptide, phycocyanin-associated, rod (286 aa).

The region spanning A2–R180 is the PBS-linker domain. Positions D234–A286 constitute a CpcD-like domain.

This sequence belongs to the phycobilisome linker protein family. Associated with the phycobilisome, a hemidiscoidal structure that is composed of two distinct substructures: a core complex and a number of rods radiating from the core.

The protein localises to the cellular thylakoid membrane. In terms of biological role, rod linker protein, associated with phycocyanin. Linker polypeptides determine the state of aggregation and the location of the disk-shaped phycobiliprotein units within the phycobilisome and modulate their spectroscopic properties in order to mediate a directed and optimal energy transfer. This is Phycobilisome 32.1 kDa linker polypeptide, phycocyanin-associated, rod (cpcC) from Nostoc sp. (strain PCC 7120 / SAG 25.82 / UTEX 2576).